We begin with the raw amino-acid sequence, 476 residues long: Deoxyguanosinetriphosphate triphosphohydrolase-like protein 2 (476 aa).

The interval 1–20 is disordered; that stretch reads MYTDADRSREVVPEKDGHDK. In terms of domain architecture, HD spans 60 to 233; it reads RLTHSLEVAQ…MDLADDIAYS (174 aa).

It belongs to the dGTPase family. Type 2 subfamily.

In Mesorhizobium japonicum (strain LMG 29417 / CECT 9101 / MAFF 303099) (Mesorhizobium loti (strain MAFF 303099)), this protein is Deoxyguanosinetriphosphate triphosphohydrolase-like protein 2.